We begin with the raw amino-acid sequence, 217 residues long: 7-cyano-7-deazaguanine synthase (217 aa).

10 to 20 (FSGGQDSTTCL) contributes to the ATP binding site. Zn(2+) contacts are provided by Cys185, Cys194, Cys197, and Cys200.

This sequence belongs to the QueC family. As to quaternary structure, homodimer. It depends on Zn(2+) as a cofactor.

The enzyme catalyses 7-carboxy-7-deazaguanine + NH4(+) + ATP = 7-cyano-7-deazaguanine + ADP + phosphate + H2O + H(+). The protein operates within purine metabolism; 7-cyano-7-deazaguanine biosynthesis. In terms of biological role, catalyzes the ATP-dependent conversion of 7-carboxy-7-deazaguanine (CDG) to 7-cyano-7-deazaguanine (preQ(0)). In Streptococcus thermophilus (strain ATCC BAA-491 / LMD-9), this protein is 7-cyano-7-deazaguanine synthase.